A 511-amino-acid polypeptide reads, in one-letter code: Probable lipid II flippase MurJ (511 aa).

Transmembrane regions (helical) follow at residues 25–45 (DILI…FISF), 85–105 (SSIL…GGFF), 133–153 (IMFP…ILNS), 156–178 (YFSI…SVFF), 245–265 (ISLI…ISWI), 271–291 (LIEF…FTSL), 315–335 (LIVS…VIIV), 356–376 (LYSC…AFYA), 400–420 (FLIF…TSWV), 442–462 (FIFI…LFVV), and 481–501 (LFFG…ILGI).

The protein belongs to the MurJ/MviN family.

It localises to the cell inner membrane. It functions in the pathway cell wall biogenesis; peptidoglycan biosynthesis. In terms of biological role, involved in peptidoglycan biosynthesis. Transports lipid-linked peptidoglycan precursors from the inner to the outer leaflet of the cytoplasmic membrane. The chain is Probable lipid II flippase MurJ from Buchnera aphidicola subsp. Acyrthosiphon pisum (strain APS) (Acyrthosiphon pisum symbiotic bacterium).